We begin with the raw amino-acid sequence, 606 residues long: MNIEEKLTTSIISAIKTLYGQDVPGKMVQLQKTKKEFEGHLTLVVFPFLKMSKKGPEQTAQEIGGYLKEHAPELVSAYNAVKGFLNLTIASDCWIELLNSIQAAPEYGIEKATENSPLVMIEYSSPNTNKPLHLGHVRNNLLGNALANVMAANGNKVVKTNIVNDRGIHICKSMLAWLKYGNGETPESSGKKGDHLIGDYYVAFDKHYKAEVKELTAQYQAEGLNEEEAKAKAEANSPLMLEAREMLRKWEANDPEIRALWKKMNDWVYAGFDETYKMMGVSFDKIYYESNTYLEGKEKVMEGLEKGFFYRKEDNSVWADLTAEGLDHKLLLRGDGTSVYMTQDIGTAKLRFQDYPINKMIYVVGNEQNYHFQVLSILLDKLGFEWGKGLVHFSYGMVELPEGKMKSREGTVVDADDLMEAMIETAKETSAELGKLDGLTQEEADNIARIVGLGALKYFILKVDARKNMTFNPKESIDFNGNTGPFIQYTYARIQSVLRKAAEAGIVIPEIIPAGLELSAKEEGLIQMLADFKSVVKQAGSDYNPSIIANYAYDLVKEYNQFYHDFSILREENEALKVFRLALSANVGKIVKTAMGLLGIEVPERM.

The short motif at 126-136 is the 'HIGH' region element; sequence PNTNKPLHLGH.

The protein belongs to the class-I aminoacyl-tRNA synthetase family. In terms of assembly, monomer.

It is found in the cytoplasm. The catalysed reaction is tRNA(Arg) + L-arginine + ATP = L-arginyl-tRNA(Arg) + AMP + diphosphate. The polypeptide is Arginine--tRNA ligase (Phocaeicola vulgatus (strain ATCC 8482 / DSM 1447 / JCM 5826 / CCUG 4940 / NBRC 14291 / NCTC 11154) (Bacteroides vulgatus)).